The sequence spans 250 residues: Triosephosphate isomerase (250 aa).

9-11 (NWK) provides a ligand contact to substrate. The active-site Electrophile is the His-96. The Proton acceptor role is filled by Glu-166. Substrate is bound by residues Gly-172, Ser-212, and 233–234 (GG).

It belongs to the triosephosphate isomerase family. As to quaternary structure, homodimer.

It localises to the cytoplasm. It carries out the reaction D-glyceraldehyde 3-phosphate = dihydroxyacetone phosphate. Its pathway is carbohydrate biosynthesis; gluconeogenesis. It participates in carbohydrate degradation; glycolysis; D-glyceraldehyde 3-phosphate from glycerone phosphate: step 1/1. Functionally, involved in the gluconeogenesis. Catalyzes stereospecifically the conversion of dihydroxyacetone phosphate (DHAP) to D-glyceraldehyde-3-phosphate (G3P). The sequence is that of Triosephosphate isomerase from Chlorobium phaeovibrioides (strain DSM 265 / 1930) (Prosthecochloris vibrioformis (strain DSM 265)).